A 91-amino-acid chain; its full sequence is Small ribosomal subunit protein uS19 (91 aa).

Belongs to the universal ribosomal protein uS19 family.

Protein S19 forms a complex with S13 that binds strongly to the 16S ribosomal RNA. This Marinomonas sp. (strain MWYL1) protein is Small ribosomal subunit protein uS19.